The following is a 660-amino-acid chain: Tripartite terminase subunit 3 (660 aa).

The Walker A motif signature appears at 203 to 210 (VPRRHGKT). A Walker B motif motif is present at residues 294–299 (ILLVDE). Residue Glu-299 is the For ATPase activity of the active site. Active-site for nuclease activity residues include Asp-452, Glu-523, and Asp-637.

The protein belongs to the herpesviridae TRM3 protein family. Interacts with the terminase subunits TRM1 and TRM2. Interacts with portal protein.

Its subcellular location is the host nucleus. Functionally, component of the molecular motor that translocates viral genomic DNA in empty capsid during DNA packaging. Forms a tripartite terminase complex together with TRM1 and TRM2 in the host cytoplasm. Once the complex reaches the host nucleus, it interacts with the capsid portal vertex. This portal forms a ring in which genomic DNA is translocated into the capsid. TRM3 carries an RNase H-like nuclease activity that plays an important role for the cleavage of concatemeric viral DNA into unit length genomes. In Elephas maximus (Indian elephant), this protein is Tripartite terminase subunit 3.